Here is a 914-residue protein sequence, read N- to C-terminus: Protein GAMETE EXPRESSED 2 (914 aa).

Filamin repeat units lie at residues 249–382 (IGYC…IKEV) and 391–485 (ACSV…DVNV). The helical transmembrane segment at 893–913 (LVVVPFSFFSIKLFSLLMVLI) threads the bilayer.

In tricellular pollen, expressed in mature sperm cells but not in the vegetative cell. In bicellular pollen, detected in the progenitor generative cell. Detected in the egg cell within the female gametophyte.

The protein resides in the cell membrane. The protein is Protein GAMETE EXPRESSED 2 (GEX2) of Arabidopsis thaliana (Mouse-ear cress).